We begin with the raw amino-acid sequence, 459 residues long: MEGRVSPVGSSHRLLTAAVLFRGPVEPLVFLANFALVLQGPLTTQYIWHRISTELGYNGTRHRENCGNQSADPVLKEVETLTSHWTLYMNVGGFLVGLFWSTLLGAWSDRVGRRPLLVLASLGLLLQAVVSIFVVQLQLHIGFFVLGRALCALLGDFNGLLAASFASVADVSSNHSRTFRMALLEACIGVAGTLASLLGGHWLRAQGYANPFWLALAVLIVMTLYAAFCFGETVKEPKSTRLFTLRHHRSIVQLYVVPAPEKSRMHLALYSLAIFVVVTVHFGAQDILTLYELSTPLCWDSKLIGYGSAAQHLPYLTSLLGLRLLQFCLADTWVAEIGLAFNILGMVVFAFATITPLMFTGYGLLFLSLVTTPVIRAKLSKLVSESEQGALFSAVACVNSLAMLMASGIFNSLYPATLNFMKGFPFLLGAGLLFIPAILIGVLEKVNPHPEFQQFPQNS.

Residue Met1 is modified to N-acetylmethionine. Residues 1–25 lie on the Cytoplasmic side of the membrane; it reads MEGRVSPVGSSHRLLTAAVLFRGPV. The residue at position 6 (Ser6) is a Phosphoserine. The helical transmembrane segment at 26–44 threads the bilayer; the sequence is EPLVFLANFALVLQGPLTT. Over 45–82 the chain is Extracellular; sequence QYIWHRISTELGYNGTRHRENCGNQSADPVLKEVETLT. N-linked (GlcNAc...) asparagine glycans are attached at residues Asn58 and Asn68. Cysteines 66 and 298 form a disulfide. A helical membrane pass occupies residues 83–108; it reads SHWTLYMNVGGFLVGLFWSTLLGAWS. Topologically, residues 109-112 are cytoplasmic; sequence DRVG. A helical transmembrane segment spans residues 113–135; the sequence is RRPLLVLASLGLLLQAVVSIFVV. Topologically, residues 136-140 are extracellular; it reads QLQLH. Residues 141–154 form a helical membrane-spanning segment; the sequence is IGFFVLGRALCALL. The Cytoplasmic portion of the chain corresponds to 155-177; the sequence is GDFNGLLAASFASVADVSSNHSR. Asp156 and Glu185 together coordinate H(+). The chain crosses the membrane as a helical span at residues 178–203; sequence TFRMALLEACIGVAGTLASLLGGHWL. Topologically, residues 204-208 are extracellular; the sequence is RAQGY. The chain crosses the membrane as a helical span at residues 209–227; sequence ANPFWLALAVLIVMTLYAA. The Cytoplasmic segment spans residues 228–266; the sequence is FCFGETVKEPKSTRLFTLRHHRSIVQLYVVPAPEKSRMH. The helical transmembrane segment at 267–289 threads the bilayer; that stretch reads LALYSLAIFVVVTVHFGAQDILT. His281 provides a ligand contact to H(+). Over 290 to 302 the chain is Extracellular; the sequence is LYELSTPLCWDSK. Residues 303–325 form a helical membrane-spanning segment; sequence LIGYGSAAQHLPYLTSLLGLRLL. Residues 326–331 lie on the Cytoplasmic side of the membrane; the sequence is QFCLAD. The chain crosses the membrane as a helical span at residues 332–351; it reads TWVAEIGLAFNILGMVVFAF. Residues 352-355 lie on the Extracellular side of the membrane; the sequence is ATIT. The helical transmembrane segment at 356–376 threads the bilayer; sequence PLMFTGYGLLFLSLVTTPVIR. Residues 377-388 are Cytoplasmic-facing; it reads AKLSKLVSESEQ. A helical membrane pass occupies residues 389–414; that stretch reads GALFSAVACVNSLAMLMASGIFNSLY. At 415–422 the chain is on the extracellular side; that stretch reads PATLNFMK. Residues 423 to 441 form a helical membrane-spanning segment; that stretch reads GFPFLLGAGLLFIPAILIG. Residues 442-459 lie on the Cytoplasmic side of the membrane; the sequence is VLEKVNPHPEFQQFPQNS.

It belongs to the major facilitator superfamily. SLC46A family. As to quaternary structure, monomer. As to expression, expressed almost exclusively in the small intestine: expressed at high level in the upper half of the small intestine (duodenum and jejunum), expression decreases downwardly in the subsequent quarter and is undetectable in the last quarter (the lowest ileum). Expressed at low level in other tissues, including liver.

It localises to the cell membrane. The protein resides in the apical cell membrane. Its subcellular location is the basolateral cell membrane. The protein localises to the endosome membrane. It is found in the cytoplasm. The enzyme catalyses folate(in) + H(+)(in) = folate(out) + H(+)(out). The catalysed reaction is (6S)-5-methyl-5,6,7,8-tetrahydrofolate(in) + H(+)(in) = (6S)-5-methyl-5,6,7,8-tetrahydrofolate(out) + H(+)(out). It catalyses the reaction methotrexate(in) + H(+)(in) = methotrexate(out) + H(+)(out). It carries out the reaction pemetrexed(in) + H(+)(in) = pemetrexed(out) + H(+)(out). In contrast to human ortholog, not inhibited by myricetin. In terms of biological role, proton-coupled folate symporter that mediates folate absorption using an H(+) gradient as a driving force. Involved in the intestinal absorption of folates at the brush-border membrane of the proximal jejunum, and the transport from blood to cerebrospinal fluid across the choroid plexus. Functions at acidic pH via alternate outward- and inward-open conformation states. Protonation of residues in the outward open state primes the protein for transport. Binding of folate promotes breaking of salt bridge network and subsequent closure of the extracellular gate, leading to the inward-open state and release of protons and folate. Also able to transport antifolate drugs, such as methotrexate and pemetrexed. Involved in FOLR1-mediated endocytosis by serving as a route of export of folates from acidified endosomes. Also acts as a lower-affinity, pH-independent heme carrier protein and constitutes the main importer of heme in the intestine. Imports heme in the retina and retinal pigment epithelium, in neurons of the hippocampus, in hepatocytes and in the renal epithelial cells. Hence, participates in the trafficking of heme and increases intracellular iron content. In Rattus norvegicus (Rat), this protein is Proton-coupled folate transporter.